The chain runs to 138 residues: Large ribosomal subunit protein uL16 (138 aa).

It belongs to the universal ribosomal protein uL16 family. Part of the 50S ribosomal subunit.

In terms of biological role, binds 23S rRNA and is also seen to make contacts with the A and possibly P site tRNAs. This Ureaplasma urealyticum serovar 10 (strain ATCC 33699 / Western) protein is Large ribosomal subunit protein uL16.